We begin with the raw amino-acid sequence, 316 residues long: L-lactate dehydrogenase (316 aa).

NAD(+) contacts are provided by residues Val15, Asp37, Lys42, Tyr68, and 82–83 (GL). Substrate is bound by residues Gln85, Arg91, and 123-126 (NPVD). Residues 121–123 (ASN) and Thr146 each bind NAD(+). 151–154 (DTSR) contacts substrate. Positions 156 and 171 each coordinate beta-D-fructose 1,6-bisphosphate. The active-site Proton acceptor is the His178. A Phosphotyrosine modification is found at Tyr222. Thr231 serves as a coordination point for substrate.

It belongs to the LDH/MDH superfamily. LDH family. Homotetramer.

The protein resides in the cytoplasm. The enzyme catalyses (S)-lactate + NAD(+) = pyruvate + NADH + H(+). The protein operates within fermentation; pyruvate fermentation to lactate; (S)-lactate from pyruvate: step 1/1. With respect to regulation, allosterically activated by fructose 1,6-bisphosphate (FBP). In terms of biological role, catalyzes the conversion of lactate to pyruvate. The chain is L-lactate dehydrogenase from Borreliella afzelii (strain PKo) (Borrelia afzelii).